The primary structure comprises 458 residues: 3-isopropylmalate dehydratase large subunit (458 aa).

[4Fe-4S] cluster-binding residues include cysteine 339, cysteine 399, and cysteine 402.

The protein belongs to the aconitase/IPM isomerase family. LeuC type 1 subfamily. As to quaternary structure, heterodimer of LeuC and LeuD. [4Fe-4S] cluster is required as a cofactor.

It catalyses the reaction (2R,3S)-3-isopropylmalate = (2S)-2-isopropylmalate. The protein operates within amino-acid biosynthesis; L-leucine biosynthesis; L-leucine from 3-methyl-2-oxobutanoate: step 2/4. In terms of biological role, catalyzes the isomerization between 2-isopropylmalate and 3-isopropylmalate, via the formation of 2-isopropylmaleate. The polypeptide is 3-isopropylmalate dehydratase large subunit (Lactococcus lactis subsp. cremoris (strain MG1363)).